The chain runs to 536 residues: Lariat debranching enzyme (536 aa).

A divalent metal cation is bound by residues cysteine 8, histidine 10, aspartate 39, and asparagine 84. The tract at residues 124-154 (SGIFKSHDYRKGHFECPPYNQQTIRSAYHVR) is lariat recognition loop. Residues histidine 174, histidine 226, and histidine 228 each coordinate a divalent metal cation. The disordered stretch occupies residues 388–536 (EEGSVRGEYE…YAAEDEDEAK (149 aa)). Residues 414 to 426 (EYNTDNSGLSSIN) show a composition bias toward polar residues. Positions 430-441 (IMLDDEGGDEDL) are enriched in acidic residues. Basic and acidic residues predominate over residues 484–504 (ELEKSGVNKQVEEKSLNERPL).

This sequence belongs to the lariat debranching enzyme family. Fe(2+) is required as a cofactor. The cofactor is Zn(2+). Requires Mn(2+) as cofactor.

The protein resides in the nucleus. Its activity is regulated as follows. Active in presence of diverse metals including Fe(2+), Zn(2+), Mn(2+). Also activated by Ca(2+). Binds two metal cations in two adjacent alpha and beta metal-binding pockets. In terms of biological role, cleaves the 2'-5' phosphodiester linkage at the branch point of excised lariat intron RNA and converts them into linear molecules that can be subsequently degraded, thereby facilitating ribonucleotide turnover. Linked to its role in pre-mRNA processing mechanism, may also participate in retrovirus replication and have an antiviral cell-intrinsic defense function. In Gallus gallus (Chicken), this protein is Lariat debranching enzyme (DBR1).